The sequence spans 454 residues: Adenylosuccinate synthetase isozyme 1 B (454 aa).

The interval methionine 1–tyrosine 24 is disordered. Residues glycine 39 to lysine 45 and glycine 67 to threonine 69 contribute to the GTP site. Catalysis depends on aspartate 40, which acts as the Proton acceptor. Residues aspartate 40 and glycine 67 each coordinate Mg(2+). Aspartate 40 is a substrate binding site. Residues aspartate 40–lysine 43, asparagine 65–histidine 68, threonine 160, arginine 174, asparagine 253, threonine 268, and arginine 332 contribute to the IMP site. Catalysis depends on histidine 68, which acts as the Proton donor. Valine 328 to arginine 334 is a substrate binding site. Residues arginine 334, lysine 360–aspartate 362, and glycine 442–lysine 445 each bind GTP.

The protein belongs to the adenylosuccinate synthetase family. Homodimer. Requires Mg(2+) as cofactor.

The protein localises to the cytoplasm. The catalysed reaction is IMP + L-aspartate + GTP = N(6)-(1,2-dicarboxyethyl)-AMP + GDP + phosphate + 2 H(+). It functions in the pathway purine metabolism; AMP biosynthesis via de novo pathway; AMP from IMP: step 1/2. Functionally, component of the purine nucleotide cycle (PNC), which interconverts IMP and AMP to regulate the nucleotide levels in various tissues, and which contributes to glycolysis and ammoniagenesis. Catalyzes the first committed step in the biosynthesis of AMP from IMP. The sequence is that of Adenylosuccinate synthetase isozyme 1 B (adss1-b) from Xenopus laevis (African clawed frog).